Here is a 144-residue protein sequence, read N- to C-terminus: Large ribosomal subunit protein uL15 (144 aa).

Positions 1–48 (MIKLEYLQDPSPRKRRTKLLGRGPSSGHGKTSGRGHKGDGSRSGYKRR) are disordered.

Belongs to the universal ribosomal protein uL15 family. In terms of assembly, part of the 50S ribosomal subunit.

In terms of biological role, binds to the 23S rRNA. This chain is Large ribosomal subunit protein uL15, found in Chlamydia muridarum (strain MoPn / Nigg).